The following is a 250-amino-acid chain: HLA class II histocompatibility antigen, DO alpha chain (250 aa).

An N-terminal signal peptide occupies residues 1-25; that stretch reads MALRAGLVLGFHTLMTLLSPQEAGA. The alpha-1 stretch occupies residues 26–110; the sequence is TKADHMGSYG…ERSNRSRAIN (85 aa). Residues 26–217 lie on the Extracellular side of the membrane; that stretch reads TKADHMGSYG…VPIPPPDAME (192 aa). 2 N-linked (GlcNAc...) asparagine glycosylation sites follow: Asn104 and Asn144. An alpha-2 region spans residues 111–204; sequence VPPRVTVLPK…GLDAPLLRHW (94 aa). In terms of domain architecture, Ig-like C1-type spans 113–205; that stretch reads PRVTVLPKSR…LDAPLLRHWE (93 aa). Cys133 and Cys189 are joined by a disulfide. Residues 205-217 form a connecting peptide region; it reads ELQVPIPPPDAME. Residues 218 to 240 traverse the membrane as a helical segment; sequence TLVCALGLAIGLVGFLVGTVLII. Residues 241–250 lie on the Cytoplasmic side of the membrane; that stretch reads MGTYVSSVPR.

This sequence belongs to the MHC class II family. As to quaternary structure, heterodimer of an alpha chain (DOA) and a beta chain (DOB). Forms a heterotetrameric complex with an HLA-DM molecule during intracellular transport in endosomal/lysosomal compartments in B-cells.

The protein localises to the endosome membrane. It is found in the lysosome membrane. In terms of biological role, important modulator in the HLA class II restricted antigen presentation pathway by interaction with the HLA-DM molecule in B-cells. Modifies peptide exchange activity of HLA-DM. The chain is HLA class II histocompatibility antigen, DO alpha chain (HLA-DOA) from Homo sapiens (Human).